Consider the following 505-residue polypeptide: COMPASS component BRE2 (505 aa).

The B30.2/SPRY domain maps to 70–295 (SANPFFTILG…LKQETTNKEF (226 aa)). Serine 227 bears the Phosphoserine mark. The segment at 271-290 (EPWREDAENGPSRKKLKQET) is disordered. Residue lysine 318 participates in DNA binding. Residues 398-420 (RDESNDKNTTSAKKKKQQQKKKK) form a disordered region. Over residues 409–420 (AKKKKQQQKKKK) the composition is skewed to basic residues.

It belongs to the cclA family. As to quaternary structure, component of the Set1C/COMPASS complex which consists of SET1(2), BRE2(2), SPP1(2), SDC1(1), SHG1(1), SWD1(1), SWD2(1), and SWD3(1). Interacts directly with SDC1.

It localises to the nucleus. The protein localises to the chromosome. The protein resides in the telomere. Functionally, component of the Set1C/COMPASS complex that specifically mono-, di- and trimethylates histone H3 to form H3K4me1/2/3, which subsequently plays a role in telomere length maintenance and transcription elongation regulation. COMPASS recognizes ubiquitinated H2B on one face of the nucleosome which stimulates the methylation of H3 on the opposing face. The chain is COMPASS component BRE2 from Saccharomyces cerevisiae (strain ATCC 204508 / S288c) (Baker's yeast).